The following is a 60-amino-acid chain: Cecropin-B (60 aa).

The first 25 residues, 1–25 (MNFTKLFILVAIAVLVVVGVQPVDG), serve as a signal peptide directing secretion. The residue at position 59 (L59) is a Leucine amide.

It belongs to the cecropin family.

Its subcellular location is the secreted. Its function is as follows. Cecropins have lytic and antibacterial activity against several Gram-positive and Gram-negative bacteria. This chain is Cecropin-B (CecB), found in Anopheles gambiae (African malaria mosquito).